A 338-amino-acid chain; its full sequence is Pyridoxal 5'-phosphate synthase subunit PdxS (338 aa).

Asp-66 serves as a coordination point for D-ribose 5-phosphate. Catalysis depends on Lys-123, which acts as the Schiff-base intermediate with D-ribose 5-phosphate. D-ribose 5-phosphate is bound at residue Gly-195. Position 207 (Lys-207) interacts with D-glyceraldehyde 3-phosphate. Residues Gly-256 and 277-278 (GS) each bind D-ribose 5-phosphate.

Belongs to the PdxS/SNZ family. In terms of assembly, in the presence of PdxT, forms a dodecamer of heterodimers.

It carries out the reaction aldehydo-D-ribose 5-phosphate + D-glyceraldehyde 3-phosphate + L-glutamine = pyridoxal 5'-phosphate + L-glutamate + phosphate + 3 H2O + H(+). The protein operates within cofactor biosynthesis; pyridoxal 5'-phosphate biosynthesis. In terms of biological role, catalyzes the formation of pyridoxal 5'-phosphate from ribose 5-phosphate (RBP), glyceraldehyde 3-phosphate (G3P) and ammonia. The ammonia is provided by the PdxT subunit. Can also use ribulose 5-phosphate and dihydroxyacetone phosphate as substrates, resulting from enzyme-catalyzed isomerization of RBP and G3P, respectively. The protein is Pyridoxal 5'-phosphate synthase subunit PdxS of Saccharolobus islandicus (strain Y.N.15.51 / Yellowstone #2) (Sulfolobus islandicus).